We begin with the raw amino-acid sequence, 220 residues long: 7-cyano-7-deazaguanine synthase (220 aa).

10-20 (FSGGQDSTTCL) contacts ATP. Residues cysteine 188, cysteine 197, cysteine 200, and cysteine 203 each contribute to the Zn(2+) site.

It belongs to the QueC family. Zn(2+) serves as cofactor.

The catalysed reaction is 7-carboxy-7-deazaguanine + NH4(+) + ATP = 7-cyano-7-deazaguanine + ADP + phosphate + H2O + H(+). The protein operates within purine metabolism; 7-cyano-7-deazaguanine biosynthesis. Functionally, catalyzes the ATP-dependent conversion of 7-carboxy-7-deazaguanine (CDG) to 7-cyano-7-deazaguanine (preQ(0)). The protein is 7-cyano-7-deazaguanine synthase of Neisseria meningitidis serogroup C (strain 053442).